The primary structure comprises 250 residues: 5-oxoprolinase subunit A (250 aa).

The protein belongs to the LamB/PxpA family. Forms a complex composed of PxpA, PxpB and PxpC.

The catalysed reaction is 5-oxo-L-proline + ATP + 2 H2O = L-glutamate + ADP + phosphate + H(+). Catalyzes the cleavage of 5-oxoproline to form L-glutamate coupled to the hydrolysis of ATP to ADP and inorganic phosphate. The sequence is that of 5-oxoprolinase subunit A from Paraburkholderia phytofirmans (strain DSM 17436 / LMG 22146 / PsJN) (Burkholderia phytofirmans).